We begin with the raw amino-acid sequence, 162 residues long: Large ribosomal subunit protein uL10 (162 aa).

This sequence belongs to the universal ribosomal protein uL10 family. As to quaternary structure, part of the ribosomal stalk of the 50S ribosomal subunit. The N-terminus interacts with L11 and the large rRNA to form the base of the stalk. The C-terminus forms an elongated spine to which L12 dimers bind in a sequential fashion forming a multimeric L10(L12)X complex.

In terms of biological role, forms part of the ribosomal stalk, playing a central role in the interaction of the ribosome with GTP-bound translation factors. The protein is Large ribosomal subunit protein uL10 of Borrelia duttonii (strain Ly).